A 437-amino-acid polypeptide reads, in one-letter code: Chromosomal replication initiator protein DnaA (437 aa).

Residues 1-74 form a domain I, interacts with DnaA modulators region; that stretch reads MNLAWNKILE…EACGDKIPVE (74 aa). The tract at residues 74–98 is domain II; that stretch reads EILIETKATSPLQSFLEKSFDQKDF. Residues 99–315 form a domain III, AAA+ region region; the sequence is QFNPDYTFET…GALNDIYLYK (217 aa). ATP contacts are provided by Gly-142, Gly-144, Lys-145, and Thr-146. The domain IV, binds dsDNA stretch occupies residues 316-437; sequence KSYSLLFLNL…ERISSKYKLQ (122 aa).

Belongs to the DnaA family. As to quaternary structure, oligomerizes as a right-handed, spiral filament on DNA at oriC.

It localises to the cytoplasm. Plays an essential role in the initiation and regulation of chromosomal replication. ATP-DnaA binds to the origin of replication (oriC) to initiate formation of the DNA replication initiation complex once per cell cycle. Binds the DnaA box (a 9 base pair repeat at the origin) and separates the double-stranded (ds)DNA. Forms a right-handed helical filament on oriC DNA; dsDNA binds to the exterior of the filament while single-stranded (ss)DNA is stabiized in the filament's interior. The ATP-DnaA-oriC complex binds and stabilizes one strand of the AT-rich DNA unwinding element (DUE), permitting loading of DNA polymerase. After initiation quickly degrades to an ADP-DnaA complex that is not apt for DNA replication. Binds acidic phospholipids. The sequence is that of Chromosomal replication initiator protein DnaA from Leptospira borgpetersenii serovar Hardjo-bovis (strain JB197).